We begin with the raw amino-acid sequence, 454 residues long: Probable mitochondrial saccharopine dehydrogenase-like oxidoreductase At5g39410 (454 aa).

M1 is subject to N-acetylmethionine. The interval 215-234 (RRSRPRRPRPTICGPPAKGP) is disordered.

The protein belongs to the saccharopine dehydrogenase family.

Its subcellular location is the mitochondrion membrane. The sequence is that of Probable mitochondrial saccharopine dehydrogenase-like oxidoreductase At5g39410 from Arabidopsis thaliana (Mouse-ear cress).